An 816-amino-acid chain; its full sequence is H(+)/Cl(-) exchange transporter 5 (816 aa).

The Cytoplasmic portion of the chain corresponds to 1-124 (MAMWQGAMDN…WALIHSVSDA (124 aa)). The next 2 helical transmembrane spans lie at 125–162 (FSGWLLMLLIGLLSGSLAGLIDISAHWMTDLKEGICTG) and 208–231 (VNYFMYVLWALLFAFLAVSLVKVF). The Selectivity filter part_1 motif lies at 237 to 241 (GSGIP). Ser-238 provides a ligand contact to chloride. The helical intramembrane region spans 240–247 (IPEIKTIL). The next 2 helical transmembrane spans lie at 256-275 (LGKWTLVIKTITLVLAVSSG) and 281-300 (EGPLVHVACCCGNILCHCFN). A Selectivity filter part_2 motif is present at residues 279–283 (GKEGP). 2 consecutive intramembrane regions (helical) follow at residues 312–324 (VLSAAAAAGVSVA) and 328–336 (PIGGVLFSL). 5 helical membrane-spanning segments follow: residues 348–366 (LWRSFFAALVAAFTLRSIN), 389–414 (LVPFILLGIFGGLWGALFIRTNIAWC), 422–442 (LGKYPVIEVLVVTAITAILAF), 498–518 (MWQLALTLILKIVITIFTFGM), and 523–542 (GLFIPSMAVGAIAGRLLGVG). Residues 523–527 (GLFIP) carry the Selectivity filter part_3 motif. Phe-525 contributes to the chloride binding site. Residues 570 to 584 (GLYAMVGAAACLGGV) constitute an intramembrane region (helical). The segment at residues 585–587 (TRM) is an intramembrane region (note=Loop between two helices). Residues 588 to 599 (TVSLVVIMFELT) constitute an intramembrane region (helical). An intramembrane region (note=Loop between two helices) is located at residues 600 to 604 (GGLEY). Residues 605-622 (IVPLMAAAMTSKWVADAL) traverse the membrane as a helical segment. The Cytoplasmic portion of the chain corresponds to 623 to 816 (GREGIYDAHI…NQDPDSILFN (194 aa)). Residue Tyr-628 coordinates chloride. CBS domains are found at residues 656 to 720 (MKPR…ARKK) and 752 to 812 (ILDL…DPDS). Residues Thr-666, 687 to 689 (YSG), and 794 to 797 (TKKD) each bind ATP.

Belongs to the chloride channel (TC 2.A.49) family. ClC-5/CLCN5 subfamily. Interacts with NEDD4 and NEDD4L. Post-translationally, ubiquitinated by NEDD4L in the presence of albumin; which promotes endocytosis and proteasomal degradation.

The protein resides in the golgi apparatus membrane. Its subcellular location is the endosome membrane. It localises to the cell membrane. It catalyses the reaction 2 chloride(in) + H(+)(out) = 2 chloride(out) + H(+)(in). Its function is as follows. Proton-coupled chloride transporter. Functions as antiport system and exchanges chloride ions against protons. Important for normal acidification of the endosome lumen. May play an important role in renal tubular function. The CLC channel family contains both chloride channels and proton-coupled anion transporters that exchange chloride or another anion for protons. The absence of conserved gating glutamate residues is typical for family members that function as channels. This chain is H(+)/Cl(-) exchange transporter 5 (CLCN5), found in Pongo abelii (Sumatran orangutan).